The chain runs to 558 residues: Potassium-transporting ATPase potassium-binding subunit 2 (558 aa).

12 helical membrane-spanning segments follow: residues 1 to 21, 60 to 80, 129 to 149, 169 to 189, 246 to 266, 281 to 301, 326 to 346, 353 to 373, 376 to 396, 415 to 435, 485 to 505, and 523 to 543; these read MSIVLFLIVFILLSLIVSRYL, IKHFLLFNGLMGGLSFVLLLI, VITFLMFTSAASGYAVCIAML, FIVRVLIPFALIISLFLISQG, WSNYAEALSMMLIPGSLVFLF, IMIFVAMFVMFIGFLVTCLYF, FGIGLSALFTTITTAFTTGTV, LTPLGGMVPMVLMMLNAVFGG, VGLMNMLIYVMLTVFICSLMI, IALSFLVHPLLILVFSALAFI, IVMLLARYIPIVLQILIVSSL, and LFFSSVLIIFIILLSGLTFLP.

This sequence belongs to the KdpA family. The system is composed of three essential subunits: KdpA, KdpB and KdpC.

It localises to the cell membrane. Its function is as follows. Part of the high-affinity ATP-driven potassium transport (or Kdp) system, which catalyzes the hydrolysis of ATP coupled with the electrogenic transport of potassium into the cytoplasm. This subunit binds the extracellular potassium ions and delivers the ions to the membrane domain of KdpB through an intramembrane tunnel. This chain is Potassium-transporting ATPase potassium-binding subunit 2, found in Staphylococcus aureus (strain Mu50 / ATCC 700699).